The chain runs to 94 residues: Large ribosomal subunit protein uL23 (94 aa).

Belongs to the universal ribosomal protein uL23 family. Part of the 50S ribosomal subunit. Contacts protein L29, and trigger factor when it is bound to the ribosome.

Its function is as follows. One of the early assembly proteins it binds 23S rRNA. One of the proteins that surrounds the polypeptide exit tunnel on the outside of the ribosome. Forms the main docking site for trigger factor binding to the ribosome. In Phytoplasma australiense, this protein is Large ribosomal subunit protein uL23.